The following is a 477-amino-acid chain: tRNA-2-methylthio-N(6)-dimethylallyladenosine synthase (477 aa).

Positions 9–129 constitute an MTTase N-terminal domain; the sequence is RKLHIKSYGC…LPQLLARAKT (121 aa). [4Fe-4S] cluster is bound by residues C18, C54, C92, C170, C174, and C177. A Radical SAM core domain is found at 156 to 386; sequence RSRGISAFVT…QLQNLIDSQQ (231 aa). Residues 391–453 enclose the TRAM domain; sequence RTALGRTIDV…RYSLFGTLAS (63 aa). The tract at residues 454–477 is disordered; the sequence is KPTSGEPSNHAATGGAQFQTTAGA. Residues 464–477 are compositionally biased toward low complexity; sequence AATGGAQFQTTAGA.

It belongs to the methylthiotransferase family. MiaB subfamily. Monomer. It depends on [4Fe-4S] cluster as a cofactor.

The protein localises to the cytoplasm. It catalyses the reaction N(6)-dimethylallyladenosine(37) in tRNA + (sulfur carrier)-SH + AH2 + 2 S-adenosyl-L-methionine = 2-methylsulfanyl-N(6)-dimethylallyladenosine(37) in tRNA + (sulfur carrier)-H + 5'-deoxyadenosine + L-methionine + A + S-adenosyl-L-homocysteine + 2 H(+). Catalyzes the methylthiolation of N6-(dimethylallyl)adenosine (i(6)A), leading to the formation of 2-methylthio-N6-(dimethylallyl)adenosine (ms(2)i(6)A) at position 37 in tRNAs that read codons beginning with uridine. This chain is tRNA-2-methylthio-N(6)-dimethylallyladenosine synthase, found in Nitrobacter winogradskyi (strain ATCC 25391 / DSM 10237 / CIP 104748 / NCIMB 11846 / Nb-255).